The chain runs to 117 residues: UPF0642 protein C32H8.05 (117 aa).

The interval 39-117 (DQVNDLTKSS…SNFSKFLKKK (79 aa)) is disordered. Over residues 93–106 (KWAKKHLKKGKRAK) the composition is skewed to basic residues. Over residues 107–117 (NSNFSKFLKKK) the composition is skewed to low complexity.

It belongs to the UPF0642 family.

The protein localises to the nucleus. It localises to the nucleolus. The sequence is that of UPF0642 protein C32H8.05 from Schizosaccharomyces pombe (strain 972 / ATCC 24843) (Fission yeast).